Here is a 118-residue protein sequence, read N- to C-terminus: SPbeta prophage-derived uncharacterized protein YolB (118 aa).

This chain is SPbeta prophage-derived uncharacterized protein YolB (yolB), found in Bacillus subtilis (strain 168).